A 188-amino-acid chain; its full sequence is ATP synthase subunit delta (188 aa).

Belongs to the ATPase delta chain family. As to quaternary structure, F-type ATPases have 2 components, F(1) - the catalytic core - and F(0) - the membrane proton channel. F(1) has five subunits: alpha(3), beta(3), gamma(1), delta(1), epsilon(1). F(0) has three main subunits: a(1), b(2) and c(10-14). The alpha and beta chains form an alternating ring which encloses part of the gamma chain. F(1) is attached to F(0) by a central stalk formed by the gamma and epsilon chains, while a peripheral stalk is formed by the delta and b chains.

Its subcellular location is the cell inner membrane. Functionally, f(1)F(0) ATP synthase produces ATP from ADP in the presence of a proton or sodium gradient. F-type ATPases consist of two structural domains, F(1) containing the extramembraneous catalytic core and F(0) containing the membrane proton channel, linked together by a central stalk and a peripheral stalk. During catalysis, ATP synthesis in the catalytic domain of F(1) is coupled via a rotary mechanism of the central stalk subunits to proton translocation. Its function is as follows. This protein is part of the stalk that links CF(0) to CF(1). It either transmits conformational changes from CF(0) to CF(1) or is implicated in proton conduction. The sequence is that of ATP synthase subunit delta from Sinorhizobium medicae (strain WSM419) (Ensifer medicae).